The sequence spans 355 residues: Peptide chain release factor 1 (355 aa).

Residue glutamine 233 is modified to N5-methylglutamine.

It belongs to the prokaryotic/mitochondrial release factor family. In terms of processing, methylated by PrmC. Methylation increases the termination efficiency of RF1.

Its subcellular location is the cytoplasm. In terms of biological role, peptide chain release factor 1 directs the termination of translation in response to the peptide chain termination codons UAG and UAA. The protein is Peptide chain release factor 1 of Syntrophobacter fumaroxidans (strain DSM 10017 / MPOB).